An 85-amino-acid polypeptide reads, in one-letter code: Conotoxin Mi15a (85 aa).

The signal sequence occupies residues 1–23; it reads MEKLTVLILVATVLLTIQVLGQS. A propeptide spanning residues 24 to 49 is cleaved from the precursor; the sequence is DRDKHLKRRPKQYATKRLSARMRGHR. Residue Q50 is modified to Pyrrolidone carboxylic acid.

The protein belongs to the conotoxin O2 superfamily. In terms of processing, contains 4 disulfide bonds. Expressed by the venom duct.

The protein localises to the secreted. This is Conotoxin Mi15a from Conus miles (Soldier cone).